A 205-amino-acid chain; its full sequence is Holliday junction branch migration complex subunit RuvA (205 aa).

The tract at residues 1–62 (MFEYVTGYVE…EDIMALYGFK (62 aa)) is domain I. Positions 63-141 (TREERLLFTK…DVVPDAFVDL (79 aa)) are domain II. The tract at residues 142-152 (FSDEERFDEKK) is flexible linker. The tract at residues 153-205 (GSSAELDEALEALRALGYAEREVSRVVPELLKESLTTDQYIKKALSLLLNGKR) is domain III.

Belongs to the RuvA family. Homotetramer. Forms an RuvA(8)-RuvB(12)-Holliday junction (HJ) complex. HJ DNA is sandwiched between 2 RuvA tetramers; dsDNA enters through RuvA and exits via RuvB. An RuvB hexamer assembles on each DNA strand where it exits the tetramer. Each RuvB hexamer is contacted by two RuvA subunits (via domain III) on 2 adjacent RuvB subunits; this complex drives branch migration. In the full resolvosome a probable DNA-RuvA(4)-RuvB(12)-RuvC(2) complex forms which resolves the HJ.

Its subcellular location is the cytoplasm. Its function is as follows. The RuvA-RuvB-RuvC complex processes Holliday junction (HJ) DNA during genetic recombination and DNA repair, while the RuvA-RuvB complex plays an important role in the rescue of blocked DNA replication forks via replication fork reversal (RFR). RuvA specifically binds to HJ cruciform DNA, conferring on it an open structure. The RuvB hexamer acts as an ATP-dependent pump, pulling dsDNA into and through the RuvAB complex. HJ branch migration allows RuvC to scan DNA until it finds its consensus sequence, where it cleaves and resolves the cruciform DNA. This chain is Holliday junction branch migration complex subunit RuvA, found in Bacillus cereus (strain AH187).